A 194-amino-acid polypeptide reads, in one-letter code: MLESPWHPLLSQPATEAAIALLGCWLVRRFADGRVIRGRIVETEAYEAGDPACHGYRRQTARNRSMFGPPGQVYVYQIYGRYHCINLATEAADLASAVLIRALEFPDTEAIAGAGPGRLCRFLAIDRQLDGSWLGPTSPLDLEAADYPLGTLIQTTRIGLTRGVDLPWRWYLAESPAVSRRDRRAEAEQMGVSV.

It belongs to the DNA glycosylase MPG family.

In Synechococcus elongatus (strain ATCC 33912 / PCC 7942 / FACHB-805) (Anacystis nidulans R2), this protein is Putative 3-methyladenine DNA glycosylase.